We begin with the raw amino-acid sequence, 484 residues long: Replication factor C large subunit (484 aa).

Gly-46–Thr-53 is an ATP binding site. The segment covering Asn-463–Ala-478 has biased composition (basic and acidic residues). Residues Asn-463 to Phe-484 are disordered.

The protein belongs to the activator 1 small subunits family. RfcL subfamily. Heteromultimer composed of small subunits (RfcS) and large subunits (RfcL).

Part of the RFC clamp loader complex which loads the PCNA sliding clamp onto DNA. This Methanococcus maripaludis (strain C6 / ATCC BAA-1332) protein is Replication factor C large subunit.